Consider the following 358-residue polypeptide: Peptide chain release factor 1 (358 aa).

N5-methylglutamine is present on Q237.

It belongs to the prokaryotic/mitochondrial release factor family. Methylated by PrmC. Methylation increases the termination efficiency of RF1.

The protein localises to the cytoplasm. In terms of biological role, peptide chain release factor 1 directs the termination of translation in response to the peptide chain termination codons UAG and UAA. The chain is Peptide chain release factor 1 from Streptomyces avermitilis (strain ATCC 31267 / DSM 46492 / JCM 5070 / NBRC 14893 / NCIMB 12804 / NRRL 8165 / MA-4680).